A 360-amino-acid polypeptide reads, in one-letter code: Peptide chain release factor 1 (360 aa).

At Q237 the chain carries N5-methylglutamine.

The protein belongs to the prokaryotic/mitochondrial release factor family. Post-translationally, methylated by PrmC. Methylation increases the termination efficiency of RF1.

It is found in the cytoplasm. Functionally, peptide chain release factor 1 directs the termination of translation in response to the peptide chain termination codons UAG and UAA. The sequence is that of Peptide chain release factor 1 from Azotobacter vinelandii (strain DJ / ATCC BAA-1303).